The following is a 289-amino-acid chain: mRNA-capping enzyme small subunit (289 aa).

In terms of assembly, heterodimer of a large and a small subunit.

It is found in the virion. The catalysed reaction is a 5'-end (5'-triphosphoguanosine)-ribonucleoside in mRNA + S-adenosyl-L-methionine = a 5'-end (N(7)-methyl 5'-triphosphoguanosine)-ribonucleoside in mRNA + S-adenosyl-L-homocysteine. Functionally, catalyzes the last reaction in the mRNA cap formation pathway. The chain is mRNA-capping enzyme small subunit from Fowlpox virus (strain NVSL) (FPV).